The primary structure comprises 198 residues: Dual specificity protein phosphatase 13B (198 aa).

Residues 45–193 (HINEVWPNLF…LQVLDNRLRR (149 aa)) enclose the Tyrosine-protein phosphatase domain. The Phosphocysteine intermediate role is filled by C138.

This sequence belongs to the protein-tyrosine phosphatase family. Non-receptor class dual specificity subfamily. Most abundantly expressed in the testis.

The catalysed reaction is O-phospho-L-tyrosyl-[protein] + H2O = L-tyrosyl-[protein] + phosphate. It catalyses the reaction O-phospho-L-seryl-[protein] + H2O = L-seryl-[protein] + phosphate. It carries out the reaction O-phospho-L-threonyl-[protein] + H2O = L-threonyl-[protein] + phosphate. Dual specificity phosphatase that dephosphorylates MAPK8/JNK and MAPK14/p38, but not MAPK1/ERK2, in vitro. Exhibits intrinsic phosphatase activity towards both phospho-seryl/threonyl and -tyrosyl residues, with similar specific activities in vitro. This chain is Dual specificity protein phosphatase 13B, found in Mus musculus (Mouse).